Here is a 179-residue protein sequence, read N- to C-terminus: Large ribosomal subunit protein uL5 (179 aa).

Belongs to the universal ribosomal protein uL5 family. Part of the 50S ribosomal subunit; part of the 5S rRNA/L5/L18/L25 subcomplex. Contacts the 5S rRNA and the P site tRNA. Forms a bridge to the 30S subunit in the 70S ribosome.

Its function is as follows. This is one of the proteins that bind and probably mediate the attachment of the 5S RNA into the large ribosomal subunit, where it forms part of the central protuberance. In the 70S ribosome it contacts protein S13 of the 30S subunit (bridge B1b), connecting the 2 subunits; this bridge is implicated in subunit movement. Contacts the P site tRNA; the 5S rRNA and some of its associated proteins might help stabilize positioning of ribosome-bound tRNAs. This is Large ribosomal subunit protein uL5 from Delftia acidovorans (strain DSM 14801 / SPH-1).